Consider the following 152-residue polypeptide: Large ribosomal subunit protein bL9 (152 aa).

It belongs to the bacterial ribosomal protein bL9 family.

In terms of biological role, binds to the 23S rRNA. This is Large ribosomal subunit protein bL9 from Prochlorococcus marinus (strain MIT 9313).